A 623-amino-acid chain; its full sequence is Glutathione import ATP-binding protein GsiA (623 aa).

2 consecutive ABC transporter domains span residues 15–269 (VSGL…QTLL) and 325–564 (LRSG…RKLM). ATP contacts are provided by residues 49–56 (GESGSGKS) and 357–364 (GESGSGKS).

Belongs to the ABC transporter superfamily. Glutathione importer (TC 3.A.1.5.11) family. In terms of assembly, the complex is composed of two ATP-binding proteins (GsiA), two transmembrane proteins (GsiC and GsiD) and a solute-binding protein (GsiB).

It localises to the cell inner membrane. The catalysed reaction is glutathione(out) + ATP + H2O = glutathione(in) + ADP + phosphate + H(+). Part of the ABC transporter complex GsiABCD involved in glutathione import. Responsible for energy coupling to the transport system. The polypeptide is Glutathione import ATP-binding protein GsiA (Salmonella typhimurium (strain LT2 / SGSC1412 / ATCC 700720)).